Reading from the N-terminus, the 505-residue chain is MHQWRKHQQSSVHFVPTMGALHRGHGQLIKSVHGFGRLQPAAVLVSVFVNPLQFGPAEDFDSYPRDLEADCELASRSGASALWAPSVDQVFPGGASSHFRIQVPSHLQAHLCGASRPGHFDGVVTVVARLLALVRPEVLVLGEKDWQQLVILRHLVAQLGLPVRVHGIATVRDDDGLACSSRNRYLMTQQRQQALALPQLLARAARESQDGRAVDLAGLRCAWEQLGLEVEYVEKVDAFNLQPLHAGRKLCLLAAAVRCGETRLIDHTFLMSRQPIVAIDGPAGAGKSTVTRAFAERLGLLYLDTGAMYRAVTWLTQQHDVDPHDPVAVKTILENLELELEPSQSGAQTVRINGHDVTEAIRSPEVTSSVSVVAAHGCVRKALTAQQQRMGVRGGLVAEGRDIGTAVFPDAELKVFLTASPAERARRRALDLDNRGFPVPDLAELETQIEERDRMDSTREVAPLRQAEDATELISDGMTIEEVIETLIDLFRVQVPEEVWPTAGR.

The interval 1 to 268 (MHQWRKHQQS…CGETRLIDHT (268 aa)) is pantoate--beta-alanine ligase. An ATP-binding site is contributed by 18–25 (MGALHRGH). The active-site Proton donor is the histidine 25. Residue glutamine 53 participates in (R)-pantoate binding. Glutamine 53 contacts beta-alanine. Position 142-145 (142-145 (GEKD)) interacts with ATP. Glutamine 148 serves as a coordination point for (R)-pantoate. ATP-binding positions include valine 171 and 179 to 182 (CSSR). The tract at residues 269 to 505 (FLMSRQPIVA…PEEVWPTAGR (237 aa)) is cytidylate kinase.

In the N-terminal section; belongs to the pantothenate synthetase family. It in the C-terminal section; belongs to the cytidylate kinase family. Type 1 subfamily.

The protein localises to the cytoplasm. The enzyme catalyses (R)-pantoate + beta-alanine + ATP = (R)-pantothenate + AMP + diphosphate + H(+). It carries out the reaction CMP + ATP = CDP + ADP. It catalyses the reaction dCMP + ATP = dCDP + ADP. Its pathway is cofactor biosynthesis; (R)-pantothenate biosynthesis; (R)-pantothenate from (R)-pantoate and beta-alanine: step 1/1. Its function is as follows. Catalyzes the condensation of pantoate with beta-alanine in an ATP-dependent reaction via a pantoyl-adenylate intermediate. Catalyzes the transfer of a phosphate group from ATP to either CMP or dCMP to form CDP or dCDP and ADP, respectively. This Prochlorococcus marinus (strain MIT 9313) protein is Bifunctional pantoate ligase/cytidylate kinase.